A 250-amino-acid polypeptide reads, in one-letter code: Ribonuclease PH (250 aa).

Phosphate is bound by residues Arg-86 and 124 to 126 (GTR).

It belongs to the RNase PH family. As to quaternary structure, homohexameric ring arranged as a trimer of dimers.

The catalysed reaction is tRNA(n+1) + phosphate = tRNA(n) + a ribonucleoside 5'-diphosphate. In terms of biological role, phosphorolytic 3'-5' exoribonuclease that plays an important role in tRNA 3'-end maturation. Removes nucleotide residues following the 3'-CCA terminus of tRNAs; can also add nucleotides to the ends of RNA molecules by using nucleoside diphosphates as substrates, but this may not be physiologically important. Probably plays a role in initiation of 16S rRNA degradation (leading to ribosome degradation) during starvation. The polypeptide is Ribonuclease PH (Exiguobacterium sibiricum (strain DSM 17290 / CCUG 55495 / CIP 109462 / JCM 13490 / 255-15)).